Here is an 810-residue protein sequence, read N- to C-terminus: Oligoxyloglucan-reducing end-specific xyloglucanase (810 aa).

The N-terminal stretch at 1 to 28 (MRAKNGPGSWLALTAIATSLNTLALAAA) is a signal peptide. Asn32 is a glycosylation site (N-linked (GlcNAc...) asparagine). Residue Asp66 is the Nucleophile of the active site. The BNR 1 repeat unit spans residues 126-135 (FVSQDRGATF). A glycan (N-linked (GlcNAc...) asparagine) is linked at Asn188. Residues 226–236 (YVTRDSGESWE) form a BNR 2 repeat. Residues Asn298, Asn312, and Asn321 are each glycosylated (N-linked (GlcNAc...) asparagine). The stretch at 359-369 (YLSHDGGKSWK) is one BNR 3 repeat. Asn455 carries an N-linked (GlcNAc...) asparagine glycan. The active-site Proton donor is the Asp498. Asn544 carries an N-linked (GlcNAc...) asparagine glycan. The BNR 4 repeat unit spans residues 554-564 (YSADGGSSWTK). N-linked (GlcNAc...) asparagine glycosylation is found at Asn573 and Asn612. A BNR 5 repeat occupies 617–626 (YVTTDLGQTW). The N-linked (GlcNAc...) asparagine glycan is linked to Asn638. BNR repeat units lie at residues 658–667 (YLSRDGGLSY), 705–716 (YHTRNFGKKWTK), and 759–769 (YRSDDNGKTWV).

This sequence belongs to the glycosyl hydrolase 74 family.

Its subcellular location is the secreted. The catalysed reaction is Hydrolysis of cellobiose from the reducing end of xyloglucans consisting of a beta-(1-&gt;4)-linked glucan carrying alpha-D-xylosyl groups on O-6 of the glucose residues. To be a substrate, the first residue must be unsubstituted, the second residue may bear a xylosyl group, whether further glycosylated or not, and the third residue, which becomes the new terminus by the action of the enzyme, is preferably xylosylated, but this xylose residue must not be further substituted.. Its function is as follows. Oligoxyloglucan-reducing end-specific xyloglucanase involved in degradation of xyloglucans. Releases the first two glycosyl segments from oligoxyloglucans. Active against cotton xyloglucan, tamarind xyloglucan and tamarind xyloglucan oligomers. In Emericella nidulans (strain FGSC A4 / ATCC 38163 / CBS 112.46 / NRRL 194 / M139) (Aspergillus nidulans), this protein is Oligoxyloglucan-reducing end-specific xyloglucanase (xgcA).